We begin with the raw amino-acid sequence, 167 residues long: tRNA-specific adenosine deaminase (167 aa).

The region spanning Phe6–Leu117 is the CMP/dCMP-type deaminase domain. Position 57 (His57) interacts with Zn(2+). The active-site Proton donor is Glu59. Residues Cys87 and Cys90 each coordinate Zn(2+).

It belongs to the cytidine and deoxycytidylate deaminase family. As to quaternary structure, homodimer. It depends on Zn(2+) as a cofactor.

The enzyme catalyses adenosine(34) in tRNA + H2O + H(+) = inosine(34) in tRNA + NH4(+). Its function is as follows. Catalyzes the deamination of adenosine to inosine at the wobble position 34 of tRNA(Arg2). Essential for cell viability. This chain is tRNA-specific adenosine deaminase, found in Escherichia coli (strain K12).